The primary structure comprises 956 residues: Bifunctional glutamine synthetase adenylyltransferase/adenylyl-removing enzyme (956 aa).

The adenylyl removase stretch occupies residues 1–441; that stretch reads MLPLSTPLLA…IFTQLIGDDS (441 aa). The segment at 450-956 is adenylyl transferase; sequence HVPFKSLWLE…RRSWQQWLGE (507 aa).

This sequence belongs to the GlnE family. It depends on Mg(2+) as a cofactor.

The enzyme catalyses [glutamine synthetase]-O(4)-(5'-adenylyl)-L-tyrosine + phosphate = [glutamine synthetase]-L-tyrosine + ADP. It catalyses the reaction [glutamine synthetase]-L-tyrosine + ATP = [glutamine synthetase]-O(4)-(5'-adenylyl)-L-tyrosine + diphosphate. Its function is as follows. Involved in the regulation of glutamine synthetase GlnA, a key enzyme in the process to assimilate ammonia. When cellular nitrogen levels are high, the C-terminal adenylyl transferase (AT) inactivates GlnA by covalent transfer of an adenylyl group from ATP to specific tyrosine residue of GlnA, thus reducing its activity. Conversely, when nitrogen levels are low, the N-terminal adenylyl removase (AR) activates GlnA by removing the adenylyl group by phosphorolysis, increasing its activity. The regulatory region of GlnE binds the signal transduction protein PII (GlnB) which indicates the nitrogen status of the cell. This Photorhabdus laumondii subsp. laumondii (strain DSM 15139 / CIP 105565 / TT01) (Photorhabdus luminescens subsp. laumondii) protein is Bifunctional glutamine synthetase adenylyltransferase/adenylyl-removing enzyme.